The primary structure comprises 762 residues: 5-methyltetrahydropteroyltriglutamate--homocysteine methyltransferase (762 aa).

5-methyltetrahydropteroyltri-L-glutamate contacts are provided by residues 16–19 (RELK) and lysine 117. L-homocysteine contacts are provided by residues 438–440 (IGS) and glutamate 491. L-methionine contacts are provided by residues 438–440 (IGS) and glutamate 491. 5-methyltetrahydropteroyltri-L-glutamate is bound by residues 522–523 (RC) and tryptophan 568. Aspartate 606 provides a ligand contact to L-homocysteine. Aspartate 606 contacts L-methionine. Glutamate 612 lines the 5-methyltetrahydropteroyltri-L-glutamate pocket. Positions 648, 650, and 672 each coordinate Zn(2+). The Proton donor role is filled by histidine 701. Cysteine 733 is a Zn(2+) binding site.

It belongs to the vitamin-B12 independent methionine synthase family. The cofactor is Zn(2+).

It carries out the reaction 5-methyltetrahydropteroyltri-L-glutamate + L-homocysteine = tetrahydropteroyltri-L-glutamate + L-methionine. Its pathway is amino-acid biosynthesis; L-methionine biosynthesis via de novo pathway; L-methionine from L-homocysteine (MetE route): step 1/1. Its function is as follows. Catalyzes the transfer of a methyl group from 5-methyltetrahydrofolate to homocysteine resulting in methionine formation. This Pseudomonas fluorescens (strain ATCC BAA-477 / NRRL B-23932 / Pf-5) protein is 5-methyltetrahydropteroyltriglutamate--homocysteine methyltransferase.